Reading from the N-terminus, the 185-residue chain is Elongation factor P (185 aa).

Belongs to the elongation factor P family.

Its subcellular location is the cytoplasm. It participates in protein biosynthesis; polypeptide chain elongation. In terms of biological role, involved in peptide bond synthesis. Stimulates efficient translation and peptide-bond synthesis on native or reconstituted 70S ribosomes in vitro. Probably functions indirectly by altering the affinity of the ribosome for aminoacyl-tRNA, thus increasing their reactivity as acceptors for peptidyl transferase. This chain is Elongation factor P, found in Carboxydothermus hydrogenoformans (strain ATCC BAA-161 / DSM 6008 / Z-2901).